The primary structure comprises 203 residues: Snake venom metalloproteinase adamalysin-2 (203 aa).

The Peptidase M12B domain occupies 7–203; it reads RYIELVVVAD…YKPQCILNKP (197 aa). Ca(2+)-binding residues include E10 and D94. 2 disulfide bridges follow: C118-C198 and C158-C165. Residue H143 coordinates Zn(2+). E144 is a catalytic residue. H147 and H153 together coordinate Zn(2+). Residues C198 and N201 each contribute to the Ca(2+) site.

The protein belongs to the venom metalloproteinase (M12B) family. P-I subfamily. In terms of assembly, monomer. Requires Zn(2+) as cofactor. Expressed by the venom gland.

The protein resides in the secreted. The enzyme catalyses Cleavage of 1-Phe-|-Val-2, 5-His-|-Leu-6, 14-Ala-|-Leu-15, 15-Leu-|-Tyr-16, and 16-Tyr-|-Leu-17 of insulin B chain.. Functionally, has no significant hemorrhagic activity, but inactivates serpins by limited proteolysis of their reactive-site loops. The protein is Snake venom metalloproteinase adamalysin-2 of Crotalus adamanteus (Eastern diamondback rattlesnake).